Reading from the N-terminus, the 151-residue chain is Probable cGMP 3',5'-cyclic phosphodiesterase subunit delta (151 aa).

Belongs to the PDE6D/unc-119 family. Interacts with Pde6.

The protein resides in the nucleus. The protein localises to the cytoplasm. This is Probable cGMP 3',5'-cyclic phosphodiesterase subunit delta from Drosophila grimshawi (Hawaiian fruit fly).